The chain runs to 293 residues: 4-hydroxy-tetrahydrodipicolinate synthase (293 aa).

Residue Thr45 coordinates pyruvate. Residue Tyr133 is the Proton donor/acceptor of the active site. Lys161 serves as the catalytic Schiff-base intermediate with substrate. Ile204 provides a ligand contact to pyruvate.

It belongs to the DapA family. Homotetramer; dimer of dimers.

The protein resides in the cytoplasm. The catalysed reaction is L-aspartate 4-semialdehyde + pyruvate = (2S,4S)-4-hydroxy-2,3,4,5-tetrahydrodipicolinate + H2O + H(+). The protein operates within amino-acid biosynthesis; L-lysine biosynthesis via DAP pathway; (S)-tetrahydrodipicolinate from L-aspartate: step 3/4. Functionally, catalyzes the condensation of (S)-aspartate-beta-semialdehyde [(S)-ASA] and pyruvate to 4-hydroxy-tetrahydrodipicolinate (HTPA). The chain is 4-hydroxy-tetrahydrodipicolinate synthase from Yersinia pseudotuberculosis serotype I (strain IP32953).